Here is a 370-residue protein sequence, read N- to C-terminus: 3,7-dimethylxanthine N-methyltransferase CkTbS (370 aa).

Y24 contributes to the S-adenosyl-L-homocysteine binding site. T31 serves as a coordination point for theobromine. S-adenosyl-L-homocysteine is bound by residues C67, N72, D104, L105, S139, and F140. Positions 157, 160, and 161 each coordinate theobromine. Residue N178 participates in Mg(2+) binding. H226 is a theobromine binding site. Positions 264, 266, and 267 each coordinate Mg(2+). F322 serves as a coordination point for theobromine.

Belongs to the methyltransferase superfamily. Type-7 methyltransferase family. Mg(2+) serves as cofactor.

It carries out the reaction 7-methylxanthine + S-adenosyl-L-methionine = theobromine + S-adenosyl-L-homocysteine + H(+). Its pathway is alkaloid biosynthesis. In terms of biological role, involved in the biosynthesis of caffeine in cv. Puer. Involved in the biosynthesis of theacrine in cv. Kucha, a caffeine-like xanthine alkaloid with diverse beneficial biological activities including anti-depressive, sedative, and hypnotic activities, improving learning and memory, increasing exercise activity, and preventing nonalcoholic fatty liver disease. Catalyzes the conversion of 7-methylxanthine (7mX) to theobromine but not able to convert paraxanthine to caffeine. This chain is 3,7-dimethylxanthine N-methyltransferase CkTbS, found in Camellia sinensis var. assamica (Assam tea).